The following is a 379-amino-acid chain: Cytochrome b (379 aa).

Transmembrane regions (helical) follow at residues 33 to 53, 77 to 98, 113 to 133, and 178 to 198; these read FGSL…FLAM, WLIR…YLHI, WNIG…GYVL, and FFAF…VHLL. H83 and H97 together coordinate heme b. Positions 182 and 196 each coordinate heme b. Position 201 (H201) interacts with a ubiquinone. 4 consecutive transmembrane segments (helical) span residues 226–246, 288–308, 320–340, and 347–367; these read TKDF…VLFF, MGGV…PHIQ, ISQF…WIGG, and FIII…AFLP.

Belongs to the cytochrome b family. The cytochrome bc1 complex contains 11 subunits: 3 respiratory subunits (MT-CYB, CYC1 and UQCRFS1), 2 core proteins (UQCRC1 and UQCRC2) and 6 low-molecular weight proteins (UQCRH/QCR6, UQCRB/QCR7, UQCRQ/QCR8, UQCR10/QCR9, UQCR11/QCR10 and a cleavage product of UQCRFS1). This cytochrome bc1 complex then forms a dimer. Heme b serves as cofactor.

It is found in the mitochondrion inner membrane. In terms of biological role, component of the ubiquinol-cytochrome c reductase complex (complex III or cytochrome b-c1 complex) that is part of the mitochondrial respiratory chain. The b-c1 complex mediates electron transfer from ubiquinol to cytochrome c. Contributes to the generation of a proton gradient across the mitochondrial membrane that is then used for ATP synthesis. In Dipodomys ordii (Ord's kangaroo rat), this protein is Cytochrome b (MT-CYB).